Here is a 963-residue protein sequence, read N- to C-terminus: Copalyl diphosphate synthase (963 aa).

The segment at 1–539 is type II terpene cyclase (TC); the sequence is MSPMDLQESA…EAYILAALKR (539 aa). A substrate binding region spans residues 227–292; the sequence is ATQWDDECED…FIEKIRSYLH (66 aa). Asp-311 and Asp-314 together coordinate Mg(2+). The short motif at 311–314 is the DXDD element; that stretch reads DADD. Residues 333 to 341 carry the NSE/DTE motif; it reads AMLKEFEEE. Substrate-binding positions include 337-341 and 521-522; these read EFEEE and VT. The tract at residues 540–659 is linker; the sequence is AADLPDENAE…SVSVHTDHSD (120 aa). Residues 627–648 are compositionally biased toward polar residues; the sequence is TNGHYVNGTNHETPLTNGISNG. The interval 627–657 is disordered; that stretch reads TNGHYVNGTNHETPLTNGISNGDSVSVHTDH. The interval 660–963 is geranylfarnesyl diphosphate synthase (PT); it reads SYYQRSDWTA…KILARMSLEL (304 aa). 3 residues coordinate isopentenyl diphosphate: Lys-688, Arg-691, and His-720. 2 residues coordinate Mg(2+): Asp-727 and Asp-731. The DDXXD 1 motif lies at 727 to 731; it reads DDIQD. Arg-736 provides a ligand contact to dimethylallyl diphosphate. Arg-737 is a binding site for isopentenyl diphosphate. Lys-814, Thr-815, Gln-848, Asn-855, Lys-865, and Lys-875 together coordinate dimethylallyl diphosphate. Positions 851–855 match the DDXXD 2 motif; the sequence is DDYLN.

In the N-terminal section; belongs to the terpene synthase family. It in the C-terminal section; belongs to the FPP/GGPP synthase family. In terms of assembly, homohexamer. Mg(2+) is required as a cofactor.

The catalysed reaction is isopentenyl diphosphate + (2E,6E)-farnesyl diphosphate = (2E,6E,10E)-geranylgeranyl diphosphate + diphosphate. It catalyses the reaction (2E,6E,10E)-geranylgeranyl diphosphate = (+)-copalyl diphosphate. In terms of biological role, bifunctional terpene synthase that possesses both prenyltransferase and type II terpene cyclase activity, converting isopentenyl diphosphate (IPP) and dimethylallyl diphosphate (DMAPP) into geranylgeranyl diphosphate (GGPP) and further converting GGPP into copalyl diphosphate, respectively. This is Copalyl diphosphate synthase from Talaromyces verruculosus (Penicillium verruculosum).